A 211-amino-acid chain; its full sequence is Ribosomal RNA small subunit methyltransferase G (211 aa).

Residues glycine 73, phenylalanine 78, valine 124 to glutamate 125, and arginine 137 contribute to the S-adenosyl-L-methionine site.

It belongs to the methyltransferase superfamily. RNA methyltransferase RsmG family.

The protein localises to the cytoplasm. Its function is as follows. Specifically methylates the N7 position of a guanine in 16S rRNA. In Christiangramia forsetii (strain DSM 17595 / CGMCC 1.15422 / KT0803) (Gramella forsetii), this protein is Ribosomal RNA small subunit methyltransferase G.